We begin with the raw amino-acid sequence, 808 residues long: Type VI secretion system spike protein VgrG4b (808 aa).

Belongs to the VgrG protein family.

It is found in the secreted. In terms of biological role, part of the H2 type VI secretion system (H2-T6SS) specialized secretion system, which delivers several virulence factors in both prokaryotic and eukaryotic cells during infection. Allows the delivery of the phospholipase effector PldA to target cells where it exerts its toxicity. This is Type VI secretion system spike protein VgrG4b from Pseudomonas aeruginosa (strain ATCC 15692 / DSM 22644 / CIP 104116 / JCM 14847 / LMG 12228 / 1C / PRS 101 / PAO1).